The sequence spans 394 residues: Dual-specificity RNA methyltransferase RlmN (394 aa).

The Proton acceptor role is filled by glutamate 115. The region spanning 121–363 (DEGRGTLCVS…SPIRTPRGED (243 aa)) is the Radical SAM core domain. The cysteines at positions 128 and 368 are disulfide-linked. Cysteine 135, cysteine 139, and cysteine 142 together coordinate [4Fe-4S] cluster. S-adenosyl-L-methionine-binding positions include 194–195 (GE), serine 226, 248–250 (SFH), and asparagine 325. The S-methylcysteine intermediate role is filled by cysteine 368.

It belongs to the radical SAM superfamily. RlmN family. Requires [4Fe-4S] cluster as cofactor.

The protein localises to the cytoplasm. The enzyme catalyses adenosine(2503) in 23S rRNA + 2 reduced [2Fe-2S]-[ferredoxin] + 2 S-adenosyl-L-methionine = 2-methyladenosine(2503) in 23S rRNA + 5'-deoxyadenosine + L-methionine + 2 oxidized [2Fe-2S]-[ferredoxin] + S-adenosyl-L-homocysteine. It catalyses the reaction adenosine(37) in tRNA + 2 reduced [2Fe-2S]-[ferredoxin] + 2 S-adenosyl-L-methionine = 2-methyladenosine(37) in tRNA + 5'-deoxyadenosine + L-methionine + 2 oxidized [2Fe-2S]-[ferredoxin] + S-adenosyl-L-homocysteine. Its function is as follows. Specifically methylates position 2 of adenine 2503 in 23S rRNA and position 2 of adenine 37 in tRNAs. m2A2503 modification seems to play a crucial role in the proofreading step occurring at the peptidyl transferase center and thus would serve to optimize ribosomal fidelity. The chain is Dual-specificity RNA methyltransferase RlmN from Roseobacter denitrificans (strain ATCC 33942 / OCh 114) (Erythrobacter sp. (strain OCh 114)).